The primary structure comprises 545 residues: Membrane protein insertase YidC (545 aa).

Helical transmembrane passes span 350 to 370 (IIGN…AVLY), 424 to 444 (LPML…FASV), 461 to 481 (ADPY…QTYL), and 498 to 518 (PLVF…YWVV).

This sequence belongs to the OXA1/ALB3/YidC family. Type 1 subfamily. In terms of assembly, interacts with the Sec translocase complex via SecD. Specifically interacts with transmembrane segments of nascent integral membrane proteins during membrane integration.

Its subcellular location is the cell inner membrane. Required for the insertion and/or proper folding and/or complex formation of integral membrane proteins into the membrane. Involved in integration of membrane proteins that insert both dependently and independently of the Sec translocase complex, as well as at least some lipoproteins. Aids folding of multispanning membrane proteins. This chain is Membrane protein insertase YidC, found in Neisseria meningitidis serogroup C (strain 053442).